Consider the following 64-residue polypeptide: Large ribosomal subunit protein uL30 (64 aa).

The protein belongs to the universal ribosomal protein uL30 family. In terms of assembly, part of the 50S ribosomal subunit.

The sequence is that of Large ribosomal subunit protein uL30 from Bdellovibrio bacteriovorus (strain ATCC 15356 / DSM 50701 / NCIMB 9529 / HD100).